Here is a 157-residue protein sequence, read N- to C-terminus: Cell number regulator 10 (157 aa).

The next 2 helical transmembrane spans lie at Asp-41–Gly-57 and Gly-66–Phe-83.

The protein belongs to the cornifelin family. Expressed in roots, leaves, stalks, immature ears and silks.

It localises to the membrane. This chain is Cell number regulator 10 (CNR10), found in Zea mays (Maize).